Reading from the N-terminus, the 150-residue chain is 5-hydroxytryptamine receptor 1B (150 aa).

At 1 to 83 the chain is on the extracellular side; sequence VEARSRILKQ…AARERKATKT (83 aa). Residues 27 to 40 show a composition bias toward polar residues; the sequence is DSPGSTSSVTSINS. The segment at 27–50 is disordered; that stretch reads DSPGSTSSVTSINSRAPDLPSESG. A helical membrane pass occupies residues 84–105; the sequence is LGIILGAFIVCWLPFFIISLAM. Residues 106 to 115 are Cytoplasmic-facing; it reads PICKDACWFH. The chain crosses the membrane as a helical span at residues 116–138; it reads LAIFDFFTWLGYLNSLINPIIYT. Positions 133 to 137 match the NPxxY motif; important for ligand-induced conformation changes and signaling motif; sequence NPIIY. The Extracellular segment spans residues 139 to 150; it reads MFNEDFKQAFHK.

The protein belongs to the G-protein coupled receptor 1 family. In terms of assembly, homodimer. Heterodimer with HTR1D. Phosphorylated. Desensitization of the receptor may be mediated by its phosphorylation. In terms of processing, palmitoylated.

It localises to the cell membrane. Functionally, G-protein coupled receptor for 5-hydroxytryptamine (serotonin). Also functions as a receptor for ergot alkaloid derivatives, various anxiolytic and antidepressant drugs and other psychoactive substances, such as lysergic acid diethylamide (LSD). Ligand binding causes a conformation change that triggers signaling via guanine nucleotide-binding proteins (G proteins) and modulates the activity of downstream effectors, such as adenylate cyclase. HTR1B is coupled to G(i)/G(o) G alpha proteins and mediates inhibitory neurotransmission by inhibiting adenylate cyclase activity. Arrestin family members inhibit signaling via G proteins and mediate activation of alternative signaling pathways. Regulates the release of 5-hydroxytryptamine, dopamine and acetylcholine in the brain, and thereby affects neural activity, nociceptive processing, pain perception, mood and behavior. Besides, plays a role in vasoconstriction of cerebral arteries. The sequence is that of 5-hydroxytryptamine receptor 1B (HTR1B) from Sus scrofa (Pig).